A 600-amino-acid chain; its full sequence is MDISKIRNFSIIAHIDHGKSTLADRLLEYTGALTAREMQSQFLDKMDLERERGITIKAQTVRLNYTADDGNTYVLNLIDTPGHVDFTYEVSRSLAACEGGLLVVDASQGVEAQTLANVYLALDNDLEVFPVLNKIDLPAAEPERVKHEIEEIIGIDAHDAVLASAKEGIGTREILEEIVKKIPAPQGDVAAPLKALLFDSWYDQYQGVIILVRLFEGSLKKGDKIQLMSTNKAYEALKVGVFSPVMVEVPQLTAGEVGFVIAGIKDVADAKVGDTVTLLHRQCAEMLGGFKEVKPMVFSGLYPIDTAQYEQLRDALAKLKLNDSSFSFEPETSVALGFGFRCGFLGLLHMEIIQERLEREFGLDLITTAPTVVYRVHKMNGDVYSIQSANQMPELQSTEYLEEPFILAHIHVPNDYVGGVLALCEDKRGVQREIKYLTPTRVMIIYELPLNEIVLDFYDRLKSITKGYASLDYEHLEYRRSDLVRMNVLINGEVVDALSLILHRDKAYFRGRDLVSKMKELISRQMFEVAIQAAIGSKIIARETVKAMRKDVLAKCYGGDITRKRKLLEKQKEGKKRMKNVGNVELPQEAFLAILKVDDK.

The 183-residue stretch at 4–186 (SKIRNFSIIA…EIVKKIPAPQ (183 aa)) folds into the tr-type G domain. Residues 16–21 (DHGKST) and 133–136 (NKID) contribute to the GTP site.

The protein belongs to the TRAFAC class translation factor GTPase superfamily. Classic translation factor GTPase family. LepA subfamily.

The protein resides in the cell inner membrane. The enzyme catalyses GTP + H2O = GDP + phosphate + H(+). In terms of biological role, required for accurate and efficient protein synthesis under certain stress conditions. May act as a fidelity factor of the translation reaction, by catalyzing a one-codon backward translocation of tRNAs on improperly translocated ribosomes. Back-translocation proceeds from a post-translocation (POST) complex to a pre-translocation (PRE) complex, thus giving elongation factor G a second chance to translocate the tRNAs correctly. Binds to ribosomes in a GTP-dependent manner. This chain is Elongation factor 4, found in Trichlorobacter lovleyi (strain ATCC BAA-1151 / DSM 17278 / SZ) (Geobacter lovleyi).